The primary structure comprises 263 residues: Putative TATA-binding protein pB263R (263 aa).

The protein belongs to the asfivirus B263R family.

Putative TATA-binding protein. This chain is Putative TATA-binding protein pB263R, found in African swine fever virus (isolate Warthog/Namibia/Wart80/1980) (ASFV).